We begin with the raw amino-acid sequence, 638 residues long: Chaperone protein DnaK (638 aa).

A Phosphothreonine; by autocatalysis modification is found at T200. The interval 598–621 (SLHMAATAEQQSGSTGAGAGASAK) is disordered.

Belongs to the heat shock protein 70 family.

Its function is as follows. Acts as a chaperone. This chain is Chaperone protein DnaK, found in Xylella fastidiosa (strain M23).